We begin with the raw amino-acid sequence, 239 residues long: Sugar fermentation stimulation protein homolog (239 aa).

This sequence belongs to the SfsA family.

The protein is Sugar fermentation stimulation protein homolog of Agrobacterium fabrum (strain C58 / ATCC 33970) (Agrobacterium tumefaciens (strain C58)).